Reading from the N-terminus, the 147-residue chain is Sec-independent protein translocase protein TatB (147 aa).

Residues 2–22 (FSSIGWPEIFTVLILGLIIIG) form a helical membrane-spanning segment. The interval 96 to 147 (FDPKKIMASGTEGEAYRERGINPQPAGDSASPQTPSNKESQPKAGFSWDDIT) is disordered. A compositionally biased stretch (polar residues) spans 125-134 (ASPQTPSNKE).

This sequence belongs to the TatB family. In terms of assembly, the Tat system comprises two distinct complexes: a TatABC complex, containing multiple copies of TatA, TatB and TatC subunits, and a separate TatA complex, containing only TatA subunits. Substrates initially bind to the TatABC complex, which probably triggers association of the separate TatA complex to form the active translocon.

The protein localises to the cell membrane. Functionally, part of the twin-arginine translocation (Tat) system that transports large folded proteins containing a characteristic twin-arginine motif in their signal peptide across membranes. Together with TatC, TatB is part of a receptor directly interacting with Tat signal peptides. TatB may form an oligomeric binding site that transiently accommodates folded Tat precursor proteins before their translocation. This Corynebacterium diphtheriae (strain ATCC 700971 / NCTC 13129 / Biotype gravis) protein is Sec-independent protein translocase protein TatB.